A 423-amino-acid chain; its full sequence is Serine--tRNA ligase (423 aa).

230 to 232 (TAE) lines the L-serine pocket. Residue 261 to 263 (RAE) coordinates ATP. E284 lines the L-serine pocket. 348–351 (EISS) serves as a coordination point for ATP. L-serine is bound at residue S384.

This sequence belongs to the class-II aminoacyl-tRNA synthetase family. Type-1 seryl-tRNA synthetase subfamily. In terms of assembly, homodimer. The tRNA molecule binds across the dimer.

Its subcellular location is the cytoplasm. The catalysed reaction is tRNA(Ser) + L-serine + ATP = L-seryl-tRNA(Ser) + AMP + diphosphate + H(+). The enzyme catalyses tRNA(Sec) + L-serine + ATP = L-seryl-tRNA(Sec) + AMP + diphosphate + H(+). It participates in aminoacyl-tRNA biosynthesis; selenocysteinyl-tRNA(Sec) biosynthesis; L-seryl-tRNA(Sec) from L-serine and tRNA(Sec): step 1/1. Functionally, catalyzes the attachment of serine to tRNA(Ser). Is also able to aminoacylate tRNA(Sec) with serine, to form the misacylated tRNA L-seryl-tRNA(Sec), which will be further converted into selenocysteinyl-tRNA(Sec). The sequence is that of Serine--tRNA ligase from Acetivibrio thermocellus (strain ATCC 27405 / DSM 1237 / JCM 9322 / NBRC 103400 / NCIMB 10682 / NRRL B-4536 / VPI 7372) (Clostridium thermocellum).